The following is a 207-amino-acid chain: Abscisic acid receptor PYL4 (207 aa).

The segment at 45-195 is START-like; that stretch reads HEVGPNQCCS…NLQSLAKIAE (151 aa). The cysteines at positions 52 and 176 are disulfide-linked. Abscisate-binding positions include Lys-81, 111 to 116, 138 to 144, and Glu-160; these read AASSTE and RLSNYRS. The Gate loop signature appears at 107 to 111; that stretch reads SGLPA. A Latch loop motif is present at residues 137-139; that stretch reads HRL.

The protein belongs to the PYR/PYL/RCAR abscisic acid intracellular receptor family. As to quaternary structure, monomer. Homodimer. Binds ABA on one subunit only. Interacts with HAB1, ABI1 and ABI2, and possibly with other PP2Cs. Binds to CARs protein in an ABA-independent manner, both at the plasma membrane and in the nucleus. Interacts directly with CAR1 and CAR4. Interacts with TOPP1. Interacts with DDA1. Interacts with FREE1 (via N-terminus). Interacts with the E3 ubiquitin-protein ligase RSL1 at the plasma membrane. In terms of processing, ubiquitynated and degraded by the proteasome upon binding to the E3 ubiquitin-protein ligase RSL1 at the plasma membrane.

It localises to the cytoplasm. The protein localises to the nucleus. It is found in the cell membrane. Its subcellular location is the vacuole. Its function is as follows. Receptor for abscisic acid (ABA) required for ABA-mediated responses such as stomatal closure and germination inhibition. Inhibits the activity of group-A protein phosphatases type 2C (PP2Cs) when activated by ABA. Can be activated by both (-)-ABA and (+)-ABA. In Arabidopsis thaliana (Mouse-ear cress), this protein is Abscisic acid receptor PYL4.